The primary structure comprises 335 residues: Holliday junction branch migration complex subunit RuvB (335 aa).

Residues 1 to 181 (MSERVISPEP…FGLLIRLNLY (181 aa)) are large ATPase domain (RuvB-L). ATP contacts are provided by residues leucine 20, arginine 21, glycine 62, lysine 65, threonine 66, threonine 67, 128 to 130 (EDF), arginine 171, tyrosine 181, and arginine 218. Mg(2+) is bound at residue threonine 66. The interval 182-252 (SPEDLEKIVT…IAGAGLALLQ (71 aa)) is small ATPAse domain (RuvB-S). Residues 255–335 (ELGLDDIDRR…KLNHSQKTLF (81 aa)) form a head domain (RuvB-H) region. The DNA site is built by arginine 310 and arginine 315.

Belongs to the RuvB family. In terms of assembly, homohexamer. Forms an RuvA(8)-RuvB(12)-Holliday junction (HJ) complex. HJ DNA is sandwiched between 2 RuvA tetramers; dsDNA enters through RuvA and exits via RuvB. An RuvB hexamer assembles on each DNA strand where it exits the tetramer. Each RuvB hexamer is contacted by two RuvA subunits (via domain III) on 2 adjacent RuvB subunits; this complex drives branch migration. In the full resolvosome a probable DNA-RuvA(4)-RuvB(12)-RuvC(2) complex forms which resolves the HJ.

It localises to the cytoplasm. The catalysed reaction is ATP + H2O = ADP + phosphate + H(+). In terms of biological role, the RuvA-RuvB-RuvC complex processes Holliday junction (HJ) DNA during genetic recombination and DNA repair, while the RuvA-RuvB complex plays an important role in the rescue of blocked DNA replication forks via replication fork reversal (RFR). RuvA specifically binds to HJ cruciform DNA, conferring on it an open structure. The RuvB hexamer acts as an ATP-dependent pump, pulling dsDNA into and through the RuvAB complex. RuvB forms 2 homohexamers on either side of HJ DNA bound by 1 or 2 RuvA tetramers; 4 subunits per hexamer contact DNA at a time. Coordinated motions by a converter formed by DNA-disengaged RuvB subunits stimulates ATP hydrolysis and nucleotide exchange. Immobilization of the converter enables RuvB to convert the ATP-contained energy into a lever motion, pulling 2 nucleotides of DNA out of the RuvA tetramer per ATP hydrolyzed, thus driving DNA branch migration. The RuvB motors rotate together with the DNA substrate, which together with the progressing nucleotide cycle form the mechanistic basis for DNA recombination by continuous HJ branch migration. Branch migration allows RuvC to scan DNA until it finds its consensus sequence, where it cleaves and resolves cruciform DNA. The polypeptide is Holliday junction branch migration complex subunit RuvB (Methanoregula boonei (strain DSM 21154 / JCM 14090 / 6A8)).